The sequence spans 505 residues: Sucrose porin (505 aa).

The first 22 residues, 1–22 (MYRKSTLAMLIALLTSAASAHA), serve as a signal peptide directing secretion. Residues 44 to 87 (ENRAQTAENRAGAAEKKVQQLTAQQQKNQNSTQEVAQRTARLEK) form a disordered region. The span at 62–72 (QQLTAQQQKNQ) shows a compositional bias: low complexity.

It belongs to the porin LamB (TC 1.B.3) family. Homotrimer.

It is found in the cell outer membrane. Functionally, porin for sucrose uptake. The sequence is that of Sucrose porin (scrY) from Salmonella typhimurium.